Consider the following 550-residue polypeptide: Formin-binding protein 1-like (550 aa).

An F-BAR domain is found at 1 to 263 (MSWGTELWDQ…AAKSVDERRD (263 aa)). 2 coiled-coil regions span residues 66 to 258 (FTSC…AKSV) and 334 to 426 (LEDF…QRSE). An REM-1 domain is found at 339–416 (HLPPEQRRKR…IHKNEAWLSE (78 aa)). The segment covering 423–432 (QRSERRHSAE) has biased composition (basic and acidic residues). The segment at 423-467 (QRSERRHSAEANHLVAQGRESPEGSYTEDANQEGRVQPQPHAHPE) is disordered. The SH3 domain occupies 479 to 540 (PAIGHCKSLY…PTSYIDITLE (62 aa)).

It belongs to the FNBP1 family. Homodimerizes, the dimers can polymerize end-to-end to form filamentous structures. Interacts with GTP-bound cdc42 and wasl/n-wasp.

It localises to the cytoplasm. The protein localises to the cytoskeleton. It is found in the cell cortex. Its subcellular location is the cytoplasmic vesicle. The protein resides in the cell membrane. Its function is as follows. Required to coordinate membrane tubulation with reorganization of the actin cytoskeleton during endocytosis. Promotes cdc42-induced actin polymerization by activating the wasl-waspip complex, the predominant form of wasl/n-wasp in cells. Essential for autophagy of intracellular bacterial pathogens. This chain is Formin-binding protein 1-like (fnbp1l), found in Xenopus tropicalis (Western clawed frog).